We begin with the raw amino-acid sequence, 366 residues long: MAVKKACEMFPKSLIEDVHKWGCMKQTGVSLRYMMEFGSKPTERNLLISAQFLHKELPIRVARRAIELQTLPYGLSDKPAVLKVRDWYLESFRDMRAFPEIKDSGDEKDFTQMIKAVKVRHNNVVPMMALGVNQLKKGMNSGNLDEIHQFLDRFYLSRIGIRMLIGQHVELHNPNPPLHTVGYIHTKMSPMEVARNASEDARSICFREYGSAPEINIYGDPSFTFPYVPTHLHLMMYELVKNSLRAVQERFVDSDRVAPPIRIIVADGIEDVTIKVSDEGGGIARSGLPRIFTYLYSTARNPLEEDVDLGIADVPVTMAGYGYGLPISRLYARYFGGDLQIISMEGYGTDAYLHLSRLGDSQEPLP.

Phosphohistidine; by autocatalysis is present on histidine 121. Residues 122–359 (NNVVPMMALG…DAYLHLSRLG (238 aa)) enclose the Histidine kinase domain. ATP-binding positions include 238 to 245 (ELVKNSLR), aspartate 278, 297 to 298 (ST), and 320 to 325 (GYGYGL).

This sequence belongs to the PDK/BCKDK protein kinase family. In terms of assembly, homodimer. Post-translationally, autophosphorylated on Ser residues near N-terminus. As to expression, expressed constitutively and ubiquitously.

It is found in the mitochondrion. It carries out the reaction L-seryl-[pyruvate dehydrogenase E1 alpha subunit] + ATP = O-phospho-L-seryl-[pyruvate dehydrogenase E1 alpha subunit] + ADP + H(+). With respect to regulation, treatment with the His-directed reagents diethyl pyrocarbonate (DEPC) and dichloro-(2,2*:6*,2(-terpyridine))-platinum(II) dihydrate inhibits kinase activity, including autophosphorylation. Functionally, serine protein kinase that inhibits the mitochondrial pyruvate dehydrogenase (PDH) complex (mtPDC) by phosphorylation of the E1 alpha subunit on Ser residues, thus contributing to the regulation of glucose metabolism. This Arabidopsis thaliana (Mouse-ear cress) protein is [Pyruvate dehydrogenase (acetyl-transferring)] kinase, mitochondrial (PDK).